A 165-amino-acid polypeptide reads, in one-letter code: Secreted acidic protein 2 (165 aa).

Acidic residues-rich tracts occupy residues 1–58 and 80–102; these read WSXS…DDSG and ESSD…DAYN. Positions 1 to 112 are disordered; that stretch reads WSXSGDDDDD…DDSQAGELNS (112 aa). The segment covering 103 to 112 has biased composition (polar residues); it reads DDSQAGELNS.

In terms of tissue distribution, component of the acid-insoluble and acid-soluble organic matrix of the aragonitic skeleton (at protein level).

Its subcellular location is the secreted. The sequence is that of Secreted acidic protein 2 from Acropora millepora (Staghorn coral).